Consider the following 340-residue polypeptide: Phosphoribosylformylglycinamidine cyclo-ligase (340 aa).

The protein belongs to the AIR synthase family.

It is found in the cytoplasm. The catalysed reaction is 2-formamido-N(1)-(5-O-phospho-beta-D-ribosyl)acetamidine + ATP = 5-amino-1-(5-phospho-beta-D-ribosyl)imidazole + ADP + phosphate + H(+). It functions in the pathway purine metabolism; IMP biosynthesis via de novo pathway; 5-amino-1-(5-phospho-D-ribosyl)imidazole from N(2)-formyl-N(1)-(5-phospho-D-ribosyl)glycinamide: step 2/2. In Streptococcus pyogenes serotype M3 (strain ATCC BAA-595 / MGAS315), this protein is Phosphoribosylformylglycinamidine cyclo-ligase.